The sequence spans 106 residues: Large ribosomal subunit protein uL24 (106 aa).

Belongs to the universal ribosomal protein uL24 family. As to quaternary structure, part of the 50S ribosomal subunit.

Functionally, one of two assembly initiator proteins, it binds directly to the 5'-end of the 23S rRNA, where it nucleates assembly of the 50S subunit. In terms of biological role, one of the proteins that surrounds the polypeptide exit tunnel on the outside of the subunit. This Thermosipho africanus (strain TCF52B) protein is Large ribosomal subunit protein uL24.